Reading from the N-terminus, the 184-residue chain is Lipocalin-15 (184 aa).

A signal peptide spans 1 to 20 (MMSFLLGAILTLLWAPTAQA). Residues Cys-83 and Cys-176 are joined by a disulfide bond.

It belongs to the calycin superfamily. Lipocalin family.

It localises to the secreted. This Homo sapiens (Human) protein is Lipocalin-15 (LCN15).